The chain runs to 178 residues: CDP-archaeol synthase (178 aa).

5 consecutive transmembrane segments (helical) span residues 7 to 27, 56 to 76, 91 to 111, 125 to 145, and 149 to 169; these read LFVS…ACIF, FFGV…SNLG, VIIG…GSFL, VLDQ…YYLV, and ISIT…IIAY.

It belongs to the CDP-archaeol synthase family. Mg(2+) is required as a cofactor.

It is found in the cell membrane. It catalyses the reaction 2,3-bis-O-(geranylgeranyl)-sn-glycerol 1-phosphate + CTP + H(+) = CDP-2,3-bis-O-(geranylgeranyl)-sn-glycerol + diphosphate. The protein operates within membrane lipid metabolism; glycerophospholipid metabolism. Catalyzes the formation of CDP-2,3-bis-(O-geranylgeranyl)-sn-glycerol (CDP-archaeol) from 2,3-bis-(O-geranylgeranyl)-sn-glycerol 1-phosphate (DGGGP) and CTP. This reaction is the third ether-bond-formation step in the biosynthesis of archaeal membrane lipids. The chain is CDP-archaeol synthase from Methanococcus vannielii (strain ATCC 35089 / DSM 1224 / JCM 13029 / OCM 148 / SB).